The sequence spans 341 residues: tRNA N6-adenosine threonylcarbamoyltransferase (341 aa).

2 residues coordinate Fe cation: His-113 and His-117. Residues 141–145, Asp-174, Gly-187, and Asn-282 contribute to the substrate site; that span reads LVSGG. A Fe cation-binding site is contributed by Asp-310.

Belongs to the KAE1 / TsaD family. It depends on Fe(2+) as a cofactor.

It is found in the cytoplasm. It catalyses the reaction L-threonylcarbamoyladenylate + adenosine(37) in tRNA = N(6)-L-threonylcarbamoyladenosine(37) in tRNA + AMP + H(+). Its function is as follows. Required for the formation of a threonylcarbamoyl group on adenosine at position 37 (t(6)A37) in tRNAs that read codons beginning with adenine. Is involved in the transfer of the threonylcarbamoyl moiety of threonylcarbamoyl-AMP (TC-AMP) to the N6 group of A37, together with TsaE and TsaB. TsaD likely plays a direct catalytic role in this reaction. This is tRNA N6-adenosine threonylcarbamoyltransferase from Porphyromonas gingivalis (strain ATCC BAA-308 / W83).